A 92-amino-acid chain; its full sequence is Small ribosomal subunit protein uS19 (92 aa).

The protein belongs to the universal ribosomal protein uS19 family.

Protein S19 forms a complex with S13 that binds strongly to the 16S ribosomal RNA. In Limosilactobacillus reuteri (strain DSM 20016) (Lactobacillus reuteri), this protein is Small ribosomal subunit protein uS19.